Here is a 429-residue protein sequence, read N- to C-terminus: GTPase Obg (429 aa).

The 158-residue stretch at 1-158 (MFVDHVKIYV…LNVILELKVL (158 aa)) folds into the Obg domain. Positions 119–143 (AGRGGRGNSRFATPANPAPELSEKG) are disordered. Positions 159-329 (ADVGLVGFPS…LLFAIADLLE (171 aa)) constitute an OBG-type G domain. GTP-binding positions include 165–172 (GFPSVGKS), 190–194 (FTTIV), 212–215 (DLPG), 282–285 (NKMD), and 310–312 (SAV). 2 residues coordinate Mg(2+): Ser172 and Thr192. Residues 351 to 429 (KHEAKGEDFE…LQEFEFEFVD (79 aa)) form the OCT domain.

It belongs to the TRAFAC class OBG-HflX-like GTPase superfamily. OBG GTPase family. As to quaternary structure, monomer. The cofactor is Mg(2+).

It is found in the cytoplasm. Functionally, an essential GTPase which binds GTP, GDP and possibly (p)ppGpp with moderate affinity, with high nucleotide exchange rates and a fairly low GTP hydrolysis rate. Plays a role in control of the cell cycle, stress response, ribosome biogenesis and in those bacteria that undergo differentiation, in morphogenesis control. The polypeptide is GTPase Obg (Lysinibacillus sphaericus (strain C3-41)).